The sequence spans 505 residues: Activin receptor type-1B (505 aa).

The signal sequence occupies residues 1 to 23 (MAESAGASSFFPLVVLLLAGSGG). Residues 24–126 (SGPRGIQALL…AHPSMWGPVE (103 aa)) lie on the Extracellular side of the membrane. A glycan (N-linked (GlcNAc...) asparagine) is linked at N43. A helical membrane pass occupies residues 127-149 (LVGIIAGPVFLLFLIIIIVFLVI). At 150–505 (NYHQRVYHNR…QLSVQEDVKI (356 aa)) the chain is on the cytoplasmic side. In terms of domain architecture, GS spans 177 to 206 (KTLQDLVYDLSTSGSGSGLPLFVQRTVART). Positions 207–497 (IVLQEIIGKG…LRIKKTLSQL (291 aa)) constitute a Protein kinase domain. ATP contacts are provided by residues 213–221 (IGKGRFGEV) and K234. D335 (proton acceptor) is an active-site residue. At Y380 the chain carries Phosphotyrosine.

This sequence belongs to the protein kinase superfamily. TKL Ser/Thr protein kinase family. TGFB receptor subfamily. Forms an activin receptor complex with activin receptor type-2 (ACVR2A or ACVR2B). Part of a complex consisting of MAGI2/ARIP1, ACVR2A, ACVR1B and SMAD3. Interacts with SMAD2 and SMAD3. Interacts with SMAD7. Interacts with FKBP1A. Interacts with IGSF1. Interacts with CRIPTO. Interacts with TDP2. Interacts with TSC22D1/TSC-22. Autophosphorylated. Phosphorylated by activin receptor type-2 (ACVR2A or ACVR2B) in response to activin-binding at serine and threonine residues in the GS domain. Phosphorylation of ACVR1B by activin receptor type-2 regulates association with SMAD7. In terms of processing, ubiquitinated. Level of ubiquitination is regulated by the SMAD7-SMURF1 complex. Post-translationally, ubiquitinated.

The protein resides in the cell membrane. It catalyses the reaction L-threonyl-[receptor-protein] + ATP = O-phospho-L-threonyl-[receptor-protein] + ADP + H(+). The catalysed reaction is L-seryl-[receptor-protein] + ATP = O-phospho-L-seryl-[receptor-protein] + ADP + H(+). With respect to regulation, activin receptor type-2 (ACVR2A or ACVR2B) activates the type-1 receptor through phosphorylation of its regulatory GS domain. In terms of biological role, transmembrane serine/threonine kinase activin type-1 receptor forming an activin receptor complex with activin receptor type-2 (ACVR2A or ACVR2B). Transduces the activin signal from the cell surface to the cytoplasm and is thus regulating a many physiological and pathological processes including neuronal differentiation and neuronal survival, hair follicle development and cycling, FSH production by the pituitary gland, wound healing, extracellular matrix production, immunosuppression and carcinogenesis. Activin is also thought to have a paracrine or autocrine role in follicular development in the ovary. Within the receptor complex, type-2 receptors (ACVR2A and/or ACVR2B) act as a primary activin receptors whereas the type-1 receptors like ACVR1B act as downstream transducers of activin signals. Activin binds to type-2 receptor at the plasma membrane and activates its serine-threonine kinase. The activated receptor type-2 then phosphorylates and activates the type-1 receptor such as ACVR1B. Once activated, the type-1 receptor binds and phosphorylates the SMAD proteins SMAD2 and SMAD3, on serine residues of the C-terminal tail. Soon after their association with the activin receptor and subsequent phosphorylation, SMAD2 and SMAD3 are released into the cytoplasm where they interact with the common partner SMAD4. This SMAD complex translocates into the nucleus where it mediates activin-induced transcription. Inhibitory SMAD7, which is recruited to ACVR1B through FKBP1A, can prevent the association of SMAD2 and SMAD3 with the activin receptor complex, thereby blocking the activin signal. Activin signal transduction is also antagonized by the binding to the receptor of inhibin-B via the IGSF1 inhibin coreceptor. ACVR1B also phosphorylates TDP2. The chain is Activin receptor type-1B (Acvr1b) from Mus musculus (Mouse).